The following is a 150-amino-acid chain: Cytochrome c oxidase subunit 5A, mitochondrial (150 aa).

The transit peptide at 1-41 (MLGAALRRCAVAATTRAGPRGLLHSARTPGPAAAIQSVRCY) directs the protein to the mitochondrion. Residues 2–17 (LGAALRRCAVAATTRA) carry the SIFI-degron motif. An N6-acetyllysine mark is found at lysine 87 and lysine 113. At threonine 141 the chain carries Phosphothreonine.

This sequence belongs to the cytochrome c oxidase subunit 5A family. In terms of assembly, component of the cytochrome c oxidase (complex IV, CIV), a multisubunit enzyme composed of 14 subunits. The complex is composed of a catalytic core of 3 subunits MT-CO1, MT-CO2 and MT-CO3, encoded in the mitochondrial DNA, and 11 supernumerary subunits COX4I, COX5A, COX5B, COX6A, COX6B, COX6C, COX7A, COX7B, COX7C, COX8 and NDUFA4, which are encoded in the nuclear genome. The complex exists as a monomer or a dimer and forms supercomplexes (SCs) in the inner mitochondrial membrane with NADH-ubiquinone oxidoreductase (complex I, CI) and ubiquinol-cytochrome c oxidoreductase (cytochrome b-c1 complex, complex III, CIII), resulting in different assemblies (supercomplex SCI(1)III(2)IV(1) and megacomplex MCI(2)III(2)IV(2)). Interacts with AFG1L. Interacts with RAB5IF. In terms of processing, in response to mitochondrial stress, the precursor protein is ubiquitinated by the SIFI complex in the cytoplasm before mitochondrial import, leading to its degradation. Within the SIFI complex, UBR4 initiates ubiquitin chain that are further elongated or branched by KCMF1.

It is found in the mitochondrion inner membrane. It functions in the pathway energy metabolism; oxidative phosphorylation. Its function is as follows. Component of the cytochrome c oxidase, the last enzyme in the mitochondrial electron transport chain which drives oxidative phosphorylation. The respiratory chain contains 3 multisubunit complexes succinate dehydrogenase (complex II, CII), ubiquinol-cytochrome c oxidoreductase (cytochrome b-c1 complex, complex III, CIII) and cytochrome c oxidase (complex IV, CIV), that cooperate to transfer electrons derived from NADH and succinate to molecular oxygen, creating an electrochemical gradient over the inner membrane that drives transmembrane transport and the ATP synthase. Cytochrome c oxidase is the component of the respiratory chain that catalyzes the reduction of oxygen to water. Electrons originating from reduced cytochrome c in the intermembrane space (IMS) are transferred via the dinuclear copper A center (CU(A)) of subunit 2 and heme A of subunit 1 to the active site in subunit 1, a binuclear center (BNC) formed by heme A3 and copper B (CU(B)). The BNC reduces molecular oxygen to 2 water molecules using 4 electrons from cytochrome c in the IMS and 4 protons from the mitochondrial matrix. This chain is Cytochrome c oxidase subunit 5A, mitochondrial (COX5A), found in Gorilla gorilla gorilla (Western lowland gorilla).